Consider the following 1040-residue polypeptide: Multidrug resistance protein MdtB (1040 aa).

A run of 11 helical transmembrane segments spans residues 15 to 37 (LFIMRPVATTLLMVAILLAGIIG), 345 to 362 (FELMMAIALVVMIIYLFL), 367 to 389 (ATIIPGVAVPLSLIGTFAVMVFL), 396 to 418 (LTLMALTIATGFVVDDAIVVIEN), 438 to 460 (GEIGFTIISLTFSLIAVLIPLLF), 472 to 494 (FAITLAVAILISAVVSLTLTPMM), 535 to 557 (HPWLTLSVALSTLLLSVLLWVFI), 867 to 889 (VWLIVAAVVAMYIVLGILYESFI), 909 to 931 (LMIAGSELDVIAIIGIILLIGIV), 968 to 990 (ILMTTLAALLGALPLMLSTGVGA), and 1000 to 1022 (MVGGLIVSQVLTLFTTPVIYLLF).

Belongs to the resistance-nodulation-cell division (RND) (TC 2.A.6) family. MdtB subfamily. Part of a tripartite efflux system composed of MdtA, MdtB and MdtC. MdtB forms a heteromultimer with MdtC.

The protein localises to the cell inner membrane. The MdtABC tripartite complex confers resistance against novobiocin and deoxycholate. This chain is Multidrug resistance protein MdtB, found in Escherichia coli O157:H7.